Here is a 485-residue protein sequence, read N- to C-terminus: Aldehyde dehydrogenase family 3 member A2 (485 aa).

The Cytoplasmic segment spans residues 1-463; it reads MELEVRRVRQ…FLLKRFNKEK (463 aa). 185-190 serves as a coordination point for NAD(+); that stretch reads GNTAVG. Catalysis depends on residues E207 and C241. Residue S293 is modified to Phosphoserine. The chain crosses the membrane as a helical span at residues 464–484; that stretch reads LGLLLLTFLGIVAAVLVKAEY. The Prevents secretion from ER signature appears at 481-484; sequence KAEY.

It belongs to the aldehyde dehydrogenase family. Homodimer.

The protein localises to the microsome membrane. It localises to the endoplasmic reticulum membrane. It carries out the reaction an aldehyde + NAD(+) + H2O = a carboxylate + NADH + 2 H(+). The enzyme catalyses a fatty aldehyde + NAD(+) + H2O = a fatty acid + NADH + 2 H(+). The catalysed reaction is (2E)-hexadecenal + NAD(+) + H2O = (E)-hexadec-2-enoate + NADH + 2 H(+). It catalyses the reaction hexadecanoate + NADH + 2 H(+) = hexadecanal + NAD(+) + H2O. It carries out the reaction 22-oxodocosanoate + NAD(+) + H2O = docosanedioate + NADH + 2 H(+). The enzyme catalyses 2,6,10,14-tetramethylpentadecanal + NAD(+) + H2O = 2,6,10,14-tetramethylpentadecanoate + NADH + 2 H(+). The catalysed reaction is octadecanal + NAD(+) + H2O = octadecanoate + NADH + 2 H(+). It catalyses the reaction dodecanoate + NADH + 2 H(+) = dodecanal + NAD(+) + H2O. It carries out the reaction decanal + NAD(+) + H2O = decanoate + NADH + 2 H(+). The enzyme catalyses tetradecanal + NAD(+) + H2O = tetradecanoate + NADH + 2 H(+). The catalysed reaction is octanal + NAD(+) + H2O = octanoate + NADH + 2 H(+). It catalyses the reaction heptanal + NAD(+) + H2O = heptanoate + NADH + 2 H(+). It carries out the reaction (2E,6E)-farnesal + NAD(+) + H2O = (2E,6E)-farnesoate + NADH + 2 H(+). In terms of biological role, catalyzes the oxidation of medium and long-chain aliphatic aldehydes to fatty acids. Active on a variety of saturated and unsaturated aliphatic aldehydes between 6 and 24 carbons in length. Responsible for conversion of the sphingosine 1-phosphate (S1P) degradation product hexadecenal to hexadecenoic acid. The protein is Aldehyde dehydrogenase family 3 member A2 (ALDH3A2) of Pongo abelii (Sumatran orangutan).